Consider the following 94-residue polypeptide: Co-chaperonin GroES (94 aa).

It belongs to the GroES chaperonin family. As to quaternary structure, heptamer of 7 subunits arranged in a ring. Interacts with the chaperonin GroEL.

The protein localises to the cytoplasm. Together with the chaperonin GroEL, plays an essential role in assisting protein folding. The GroEL-GroES system forms a nano-cage that allows encapsulation of the non-native substrate proteins and provides a physical environment optimized to promote and accelerate protein folding. GroES binds to the apical surface of the GroEL ring, thereby capping the opening of the GroEL channel. This Heliobacterium modesticaldum (strain ATCC 51547 / Ice1) protein is Co-chaperonin GroES.